Reading from the N-terminus, the 240-residue chain is Eukaryotic translation initiation factor 3 subunit J (240 aa).

The disordered stretch occupies residues 1–66 (MADDWESAAD…VPVKTKPSKA (66 aa)). Residues 27–45 (GEDDDDDVKESWEDEEEKK) show a composition bias toward acidic residues.

Belongs to the eIF-3 subunit J family. As to quaternary structure, component of the eukaryotic translation initiation factor 3 (eIF-3) complex. The eIF-3 complex interacts with pix.

It is found in the cytoplasm. Component of the eukaryotic translation initiation factor 3 (eIF-3) complex, which is involved in protein synthesis of a specialized repertoire of mRNAs and, together with other initiation factors, stimulates binding of mRNA and methionyl-tRNAi to the 40S ribosome. The eIF-3 complex specifically targets and initiates translation of a subset of mRNAs involved in cell proliferation. In Drosophila persimilis (Fruit fly), this protein is Eukaryotic translation initiation factor 3 subunit J.